The chain runs to 446 residues: Plant intracellular Ras-group-related LRR protein 3 (446 aa).

The stretch at 65 to 100 forms a coiled coil; sequence EACRAVVRLEETHDAYEALLQEAEGRLEAVYRSAME. Residues 101–121 are disordered; that stretch reads GKDLEEPDGRDESAAAAAGDD. LRR repeat units lie at residues 138–160, 161–184, 185–207, 208–230, 232–254, 255–277, 279–300, 301–324, 325–347, and 349–371; these read GKPV…AFGR, IQGL…IGGL, DHLE…IGLL, LNLR…ISKC, SLIE…GYEL, VNLR…ICEM, SLYL…IGKL, SSLE…SFGD, LLNL…NFGR, and DKLE…IVNK. Residues 372-384 carry the GVYW motif; it reads GVDAVKEYMLQRW.

This sequence belongs to the SHOC2 family. Widely expressed.

Its function is as follows. Leucine-rich repeat protein that likely mediates protein interactions, possibly in the context of signal transduction. The protein is Plant intracellular Ras-group-related LRR protein 3 (IRL3) of Oryza sativa subsp. japonica (Rice).